We begin with the raw amino-acid sequence, 459 residues long: tRNA modification GTPase MnmE (459 aa).

Residues arginine 24, glutamate 82, and lysine 122 each coordinate (6S)-5-formyl-5,6,7,8-tetrahydrofolate. Positions 219-379 (GIKVVISGAP…LRQHLYFSFK (161 aa)) constitute a TrmE-type G domain. GTP-binding positions include 229 to 234 (NSGKSS), 248 to 254 (TNFPGTT), and 273 to 276 (DTAG). Mg(2+) contacts are provided by serine 233 and threonine 254. Lysine 459 is a binding site for (6S)-5-formyl-5,6,7,8-tetrahydrofolate.

The protein belongs to the TRAFAC class TrmE-Era-EngA-EngB-Septin-like GTPase superfamily. TrmE GTPase family. Homodimer. Heterotetramer of two MnmE and two MnmG subunits. K(+) is required as a cofactor.

Its subcellular location is the cytoplasm. Functionally, exhibits a very high intrinsic GTPase hydrolysis rate. Involved in the addition of a carboxymethylaminomethyl (cmnm) group at the wobble position (U34) of certain tRNAs, forming tRNA-cmnm(5)s(2)U34. The chain is tRNA modification GTPase MnmE from Buchnera aphidicola subsp. Baizongia pistaciae (strain Bp).